A 117-amino-acid chain; its full sequence is Ribonuclease P protein component (117 aa).

Belongs to the RnpA family. In terms of assembly, consists of a catalytic RNA component (M1 or rnpB) and a protein subunit.

It catalyses the reaction Endonucleolytic cleavage of RNA, removing 5'-extranucleotides from tRNA precursor.. RNaseP catalyzes the removal of the 5'-leader sequence from pre-tRNA to produce the mature 5'-terminus. It can also cleave other RNA substrates such as 4.5S RNA. The protein component plays an auxiliary but essential role in vivo by binding to the 5'-leader sequence and broadening the substrate specificity of the ribozyme. The protein is Ribonuclease P protein component of Aliivibrio fischeri (strain ATCC 700601 / ES114) (Vibrio fischeri).